The sequence spans 37 residues: Large ribosomal subunit protein bL36c (37 aa).

The protein belongs to the bacterial ribosomal protein bL36 family.

It is found in the plastid. Its subcellular location is the chloroplast. This is Large ribosomal subunit protein bL36c from Ostreococcus tauri.